We begin with the raw amino-acid sequence, 418 residues long: Putative ion-transport protein YfeO (418 aa).

12 helical membrane passes run 10 to 30, 54 to 74, 99 to 119, 120 to 140, 149 to 169, 186 to 206, 223 to 243, 258 to 278, 300 to 320, 322 to 342, 343 to 363, and 386 to 406; these read LLLS…LIVV, DSPF…GLVI, ALPG…SLGP, EHPI…RLLP, ILAS…AALI, LFAP…FFHP, ILSG…AVWC, VLML…AGPV, DYFL…ASGF, GGRI…LHEH, VPAV…VLVV, and LLCI…IMMV.

It belongs to the chloride channel (TC 2.A.49) family.

It localises to the cell membrane. This is Putative ion-transport protein YfeO from Escherichia fergusonii (strain ATCC 35469 / DSM 13698 / CCUG 18766 / IAM 14443 / JCM 21226 / LMG 7866 / NBRC 102419 / NCTC 12128 / CDC 0568-73).